The sequence spans 78 residues: Conotoxin TsMEKL-P012 (78 aa).

An N-terminal signal peptide occupies residues Met1–Ala19. Residues Leu20–Ser38 constitute a propeptide that is removed on maturation. 3 cysteine pairs are disulfide-bonded: Cys52-Cys66, Cys59-Cys70, and Cys65-Cys75.

The protein belongs to the conotoxin O2 superfamily. As to expression, expressed by the venom duct.

The protein resides in the secreted. This is Conotoxin TsMEKL-P012 from Conus tessulatus (Tessellate cone).